We begin with the raw amino-acid sequence, 95 residues long: Aspartyl/glutamyl-tRNA(Asn/Gln) amidotransferase subunit C (95 aa).

This sequence belongs to the GatC family. In terms of assembly, heterotrimer of A, B and C subunits.

The enzyme catalyses L-glutamyl-tRNA(Gln) + L-glutamine + ATP + H2O = L-glutaminyl-tRNA(Gln) + L-glutamate + ADP + phosphate + H(+). It carries out the reaction L-aspartyl-tRNA(Asn) + L-glutamine + ATP + H2O = L-asparaginyl-tRNA(Asn) + L-glutamate + ADP + phosphate + 2 H(+). Allows the formation of correctly charged Asn-tRNA(Asn) or Gln-tRNA(Gln) through the transamidation of misacylated Asp-tRNA(Asn) or Glu-tRNA(Gln) in organisms which lack either or both of asparaginyl-tRNA or glutaminyl-tRNA synthetases. The reaction takes place in the presence of glutamine and ATP through an activated phospho-Asp-tRNA(Asn) or phospho-Glu-tRNA(Gln). This Ectopseudomonas mendocina (strain ymp) (Pseudomonas mendocina) protein is Aspartyl/glutamyl-tRNA(Asn/Gln) amidotransferase subunit C.